The following is a 178-amino-acid chain: Large ribosomal subunit protein eL20y (178 aa).

Belongs to the eukaryotic ribosomal protein eL20 family.

The protein is Large ribosomal subunit protein eL20y (RPL18AB) of Arabidopsis thaliana (Mouse-ear cress).